Here is a 259-residue protein sequence, read N- to C-terminus: Pycsar effector protein RsmPycTIR (259 aa).

1 to 120 (MVGGDEVIAN…RRVHEDFSGR (120 aa)) serves as a coordination point for a nucleoside 3',5'-cyclic phosphate. Residues 126 to 229 (LATGISRRTS…AEFQYQISSS (104 aa)) are TIR-like. 3 helical membrane-spanning segments follow: residues 136-156 (GWNWTVISLTAGVLSAAAIWY), 169-189 (VLLPLVVGLTIFLLTLLADPV), and 234-254 (QATALLAPIVLGALAAYLFWI).

Its subcellular location is the cell inner membrane. The enzyme catalyses NAD(+) + H2O = ADP-D-ribose + nicotinamide + H(+). In terms of biological role, pycsar (pyrimidine cyclase system for antiphage resistance) provides immunity against bacteriophage. The pyrimidine cyclase (PycC) synthesizes cyclic nucleotides in response to infection; these serve as specific second messenger signals. The signals activate the adjacent effector, leading to bacterial cell death and abortive phage infection. A clade B Pycsar system. The effector gene of a two-gene Pycsar system. Expression of this and adjacent uridylate cyclase RsmPycC (AC A0A1V0HUX5) probably confers resistance to bacteriophage. The genes are probably only expressed in response to bacteriophage infection. Probably only responds to cUMP (produced by its cognate NTP cyclase), it may act by degrading NAD(+) and/or by impairing membrane integrity. In Rhodovulum sp. (strain MB263), this protein is Pycsar effector protein RsmPycTIR.